Reading from the N-terminus, the 607-residue chain is Siderochrome iron transporter 2 (607 aa).

Positions 1 to 46 (MGLFGSFGARNKATPQVPPGAVAKAPEGTPKGPETNDQPDMDSSRL) are disordered. Helical transmembrane passes span 86-106 (VWAT…QSGI), 129-149 (ILSS…LNLW), 152-172 (AEGF…LAAC), 180-200 (AGYV…DVFV), 210-230 (AFTF…APLA), 242-262 (WAYG…AVVF), 297-317 (IIGA…FSLA), 326-346 (SAAF…FAAW), 367-387 (LGAC…DLYF), 404-424 (YMTQ…GLWV), 432-452 (HTCL…MIHF), 459-479 (IGYV…LVIG), and 499-519 (FIGL…AAIY). Residue Asn-538 is glycosylated (N-linked (GlcNAc...) asparagine). A helical membrane pass occupies residues 573–593 (FGAVAATCILILGIPAIAVWK).

The protein belongs to the major facilitator superfamily.

The protein resides in the cell membrane. Major facilitator transporter involved in ferrichrome (FC) uptake. The protein is Siderochrome iron transporter 2 of Aspergillus fumigatus (strain ATCC MYA-4609 / CBS 101355 / FGSC A1100 / Af293) (Neosartorya fumigata).